The following is a 70-amino-acid chain: Large ribosomal subunit protein bL31 (70 aa).

Positions 16, 18, 37, and 40 each coordinate Zn(2+).

The protein belongs to the bacterial ribosomal protein bL31 family. Type A subfamily. In terms of assembly, part of the 50S ribosomal subunit. Zn(2+) is required as a cofactor.

In terms of biological role, binds the 23S rRNA. This chain is Large ribosomal subunit protein bL31, found in Alteromonas mediterranea (strain DSM 17117 / CIP 110805 / LMG 28347 / Deep ecotype).